The sequence spans 396 residues: Acetate kinase (396 aa).

Residue Asn7 coordinates Mg(2+). Position 14 (Lys14) interacts with ATP. Arg88 is a binding site for substrate. The active-site Proton donor/acceptor is the Asp145. Residues 205–209 (HLGNG), 279–281 (DFR), and 327–331 (GIGEN) contribute to the ATP site. Residue Glu381 coordinates Mg(2+).

This sequence belongs to the acetokinase family. Homodimer. Mg(2+) is required as a cofactor. It depends on Mn(2+) as a cofactor.

Its subcellular location is the cytoplasm. It carries out the reaction acetate + ATP = acetyl phosphate + ADP. Its pathway is metabolic intermediate biosynthesis; acetyl-CoA biosynthesis; acetyl-CoA from acetate: step 1/2. In terms of biological role, catalyzes the formation of acetyl phosphate from acetate and ATP. Can also catalyze the reverse reaction. The polypeptide is Acetate kinase (Campylobacter jejuni (strain RM1221)).